Reading from the N-terminus, the 180-residue chain is UPF0227 protein VV2369 (180 aa).

This sequence belongs to the UPF0227 family.

The protein is UPF0227 protein VV2369 of Vibrio vulnificus (strain YJ016).